A 239-amino-acid polypeptide reads, in one-letter code: MRPSRRAPDELRAVSLERGVVKYAEGSCMVKFGDTHVLVTATLEDRLPPWLKGQGRGWVTAEYGMLPRATLERTRREASAGKQNGRTVEIQRLIGRSLRATVDLQALGERQITVDCDVIQADGGTRTASITGAWVALADCIGWMKTRNMFKGTAPVLRDNVAAISCGIYNGTPVLDLDYAEDSEADTDANFVMTGDGRIIEVQGTAEKTPFSQDEFLALMALAKKGVARLVDLQKMAVA.

Residues R86 and 124–126 (GTR) each bind phosphate.

It belongs to the RNase PH family. Homohexameric ring arranged as a trimer of dimers.

It catalyses the reaction tRNA(n+1) + phosphate = tRNA(n) + a ribonucleoside 5'-diphosphate. Functionally, phosphorolytic 3'-5' exoribonuclease that plays an important role in tRNA 3'-end maturation. Removes nucleotide residues following the 3'-CCA terminus of tRNAs; can also add nucleotides to the ends of RNA molecules by using nucleoside diphosphates as substrates, but this may not be physiologically important. Probably plays a role in initiation of 16S rRNA degradation (leading to ribosome degradation) during starvation. The protein is Ribonuclease PH of Rhodopseudomonas palustris (strain BisB18).